Here is a 381-residue protein sequence, read N- to C-terminus: Trans-enoyl reductase iliB (381 aa).

50–53 serves as a coordination point for NADP(+); sequence VDGK. 145–152 is a substrate binding site; that stretch reads ATLATVGL. NADP(+) contacts are provided by residues 213 to 216, tyrosine 231, and 278 to 279; these read SPGS and LD. Residue 298-302 participates in substrate binding; the sequence is TYTQF. 367–368 serves as a coordination point for NADP(+); sequence IS.

It belongs to the zinc-containing alcohol dehydrogenase family. As to quaternary structure, monomer.

It carries out the reaction N-[(4E,6E,10S,12Z,14E)-6,10-dimethyl-3-oxohexadeca-4,6,12,14-tetraenoyl]-L-tyrosyl-[ACP] = (3E,5S)-3-[(2E,4E,8S,10E,12Z)-1-hydroxy-4,8-dimethyltetradeca-2,4,10,12-tetraen-1-ylidene]-5-[(4-hydroxyphenyl)methyl]pyrrolidine-2,4-dione + holo-[ACP] + H(+). It functions in the pathway mycotoxin biosynthesis. Its function is as follows. Trans-enoyl reductase; part of the gene cluster that mediates the biosynthesis of ilicicolin H, a 4-hydroxy-2-pyridonealkaloid that has potent and broad antifungal activities by inhibiting the mitochondrial respiration chain. IliB collaborates with the hybrid PKS-NRPS synthetase iliA to assemble the backbone of ilicicolin H. The PKS portion of iliA and trans-acting enoyl reductase iliB work together to construct an octaketide, and two methyl groups are introduced by the MT domain of iliA during the chain assembly. The nascent chain is then condensed with tyrosine, catalyzed by the iliA C domain, and the resulting PKS-NRPS hybrid is offloaded by the iliA RED domain to form an advanced tetramic acid intermediate. The biosynthesis of ilicicolin H starts with formation of the tetramic acid by the hybrid PKS-NRPS synthetase iliA with the partnering trans-enoyl reductase iliB since iliA lacks a designated enoylreductase (ER) domain. The cytochrome P450 monooxygenase iliC then catalyzes the ring expansion of the tetramate to the acyclic 2-pyridone. The pericyclase iliD further converts the acyclic 2-pyridone into 8-epi-ilicicolin H. 8-epi-ilicicolin H might then spontaneously convert to ilicicolin H since ilicicolin H is produced in the absence of the epimerase iliE, in contrast to what was observed for the Talaromyces variabilis ilicolin H biosynthetic pathway. The protein is Trans-enoyl reductase iliB of Neonectria sp. (strain DH2).